Here is a 336-residue protein sequence, read N- to C-terminus: MASRAQNRRPAQEVDNTISYVQCDGLAAMKMVKHCHEESRSNMEVAQGALLGLVVDDRLEITNCFPFPKSSDETIDEEEYQLNMMRRLRLVNVDHFHVGWYQSADVGNFLSLPLLESQYHYQTSIEESVVVIYDTQKSARGFLTLKAYRLTPQAIAMYKEEKFTPEALRNLKVGYENLFIEIPIVIKNSALCNIMMSEMKEMVPEEEGTHFLDLGTASVLENHLRCLMDRVDELNQEANKFNKYQQTVIRQEQDKHRMLAKHAQENAARIAKGEAAIPDEEVQKLFRPLPVPSRLNPMIVSGQINTYAQHISQFCSQSLAKLYMTQALQGAKENKQ.

Positions 21–154 constitute an MPN domain; sequence VQCDGLAAMK…LKAYRLTPQA (134 aa).

Belongs to the eIF-3 subunit H family. As to quaternary structure, component of the eukaryotic translation initiation factor 3 (eIF-3) complex.

Its subcellular location is the cytoplasm. Its function is as follows. Component of the eukaryotic translation initiation factor 3 (eIF-3) complex, which is involved in protein synthesis of a specialized repertoire of mRNAs and, together with other initiation factors, stimulates binding of mRNA and methionyl-tRNAi to the 40S ribosome. The eIF-3 complex specifically targets and initiates translation of a subset of mRNAs involved in cell proliferation. This is Eukaryotic translation initiation factor 3 subunit H from Aedes aegypti (Yellowfever mosquito).